The following is a 350-amino-acid chain: Protein RecA (350 aa).

An ATP-binding site is contributed by 67–74 (GPESSGKT).

The protein belongs to the RecA family.

It is found in the cytoplasm. Its function is as follows. Can catalyze the hydrolysis of ATP in the presence of single-stranded DNA, the ATP-dependent uptake of single-stranded DNA by duplex DNA, and the ATP-dependent hybridization of homologous single-stranded DNAs. It interacts with LexA causing its activation and leading to its autocatalytic cleavage. The protein is Protein RecA of Wolinella succinogenes (strain ATCC 29543 / DSM 1740 / CCUG 13145 / JCM 31913 / LMG 7466 / NCTC 11488 / FDC 602W) (Vibrio succinogenes).